The chain runs to 742 residues: Collectin-12 (742 aa).

At 1–37 (MKDDFAEEEEVHSFGYKRFGIQEGTQCTKCKNNWALK) the chain is on the cytoplasmic side. The helical; Signal-anchor for type II membrane protein transmembrane segment at 38 to 58 (LSIILLYILCALLTITVAILG) threads the bilayer. Residues 59 to 742 (YKVVEKMDNV…DRERELAITL (684 aa)) are Extracellular-facing. Asn67 carries an N-linked (GlcNAc...) asparagine glycan. Positions 73–141 (ETSRQTYDDK…NKDTLEKLQA (69 aa)) form a coiled coil. 2 N-linked (GlcNAc...) asparagine glycosylation sites follow: Asn159 and Asn168. Residues 215 to 254 (QQRNLITNLQRSVDDTSQAIQRIKNDFQNLQQVFLQAKKD) are a coiled coil. The N-linked (GlcNAc...) asparagine glycan is linked to Asn271. Residues 296–328 (QMDNITTASQANEQNLKDLQDVHRDAENRTAAK) are a coiled coil. The segment at 439 to 591 (TILQGPPGPR…PPGPSGAAVP (153 aa)) is disordered. 2 Collagen-like domains span residues 443 to 502 (GPPG…KGSK) and 527 to 586 (GPPG…PGPS). Over residues 501–514 (SKGLQGSKGSRGSP) the composition is skewed to low complexity. Positions 516–532 (KPGPQGPSGDPGPPGPP) are enriched in pro residues. Positions 534–556 (KDGLPGPQGPPGFQGLQGTVGEP) are enriched in low complexity. 3 disulfide bridges follow: Cys607-Cys618, Cys635-Cys730, and Cys708-Cys722. The region spanning 614-731 (FTDKCYYFST…CEDMNHFICE (118 aa)) is the C-type lectin domain. Ca(2+) contacts are provided by Phe644, Asn646, Glu650, Asp670, and Glu674. Residues Lys691, Gln694, and Asp696 each coordinate a carbohydrate. 8 residues coordinate Ca(2+): Gln694, Asp696, Asn697, Glu706, Asp707, Asn718, Asp719, and Glu731. Glu706 serves as a coordination point for a carbohydrate. Positions 718 and 719 each coordinate a carbohydrate.

As to quaternary structure, the extracellular domain forms a stable trimer. The extracellular domain interacts with fibrillar amyloid-beta peptide.

The protein resides in the membrane. Its function is as follows. Scavenger receptor that displays several functions associated with host defense. Promotes binding and phagocytosis of Gram-positive, Gram-negative bacteria and yeast. Mediates the recognition, internalization and degradation of oxidatively modified low density lipoprotein (oxLDL) by vascular endothelial cells. Binds to several carbohydrates including Gal-type ligands, D-galactose, L- and D-fucose, GalNAc, T and Tn antigens in a calcium-dependent manner and internalizes specifically GalNAc in nurse-like cells. Also binds to sialyl Lewis X or a trisaccharide and asialo-orosomucoid (ASOR). In Bos taurus (Bovine), this protein is Collectin-12 (COLEC12).